The sequence spans 625 residues: tRNA uridine 5-carboxymethylaminomethyl modification enzyme MnmG (625 aa).

FAD is bound by residues 13-18, V125, and S182; that span reads GGGHAG. NAD(+) is bound at residue 276–290; it reads GPRYCPSIEDKITRF. Q373 is an FAD binding site.

The protein belongs to the MnmG family. In terms of assembly, homodimer. Heterotetramer of two MnmE and two MnmG subunits. Requires FAD as cofactor.

The protein localises to the cytoplasm. Functionally, NAD-binding protein involved in the addition of a carboxymethylaminomethyl (cmnm) group at the wobble position (U34) of certain tRNAs, forming tRNA-cmnm(5)s(2)U34. This Lactococcus lactis subsp. cremoris (strain SK11) protein is tRNA uridine 5-carboxymethylaminomethyl modification enzyme MnmG.